The chain runs to 229 residues: Indole-3-glycerol phosphate synthase (229 aa).

The protein belongs to the TrpC family.

It catalyses the reaction 1-(2-carboxyphenylamino)-1-deoxy-D-ribulose 5-phosphate + H(+) = (1S,2R)-1-C-(indol-3-yl)glycerol 3-phosphate + CO2 + H2O. It participates in amino-acid biosynthesis; L-tryptophan biosynthesis; L-tryptophan from chorismate: step 4/5. The protein is Indole-3-glycerol phosphate synthase of Pyrococcus abyssi (strain GE5 / Orsay).